A 242-amino-acid chain; its full sequence is Ferritin, mitochondrial (242 aa).

The transit peptide at Met1–Leu49 directs the protein to the mitochondrion. In terms of domain architecture, Ferritin-like diiron spans Gln70–Gly219. Positions 87, 122, 125, 167, and 201 each coordinate Fe cation.

This sequence belongs to the ferritin family. Homooligomer of 24 subunits. The functional molecule is roughly spherical and contains a central cavity into which the polymeric mineral iron core is deposited.

The protein localises to the mitochondrion. It catalyses the reaction 4 Fe(2+) + O2 + 4 H(+) = 4 Fe(3+) + 2 H2O. Functionally, catalyzes the oxidation of ferrous iron(II) to ferric iron(III) and stores iron in a soluble, non-toxic, readily available form. Important for iron homeostasis. Iron is taken up in the ferrous form and deposited as ferric hydroxides after oxidation. The chain is Ferritin, mitochondrial from Bos taurus (Bovine).